Here is a 339-residue protein sequence, read N- to C-terminus: Biotin synthase (339 aa).

The region spanning 51-278 (TEVELATLLS…KARVRLSAGR (228 aa)) is the Radical SAM core domain. 3 residues coordinate [4Fe-4S] cluster: cysteine 66, cysteine 70, and cysteine 73. [2Fe-2S] cluster is bound by residues cysteine 110, cysteine 141, cysteine 201, and arginine 273.

This sequence belongs to the radical SAM superfamily. Biotin synthase family. As to quaternary structure, homodimer. Requires [4Fe-4S] cluster as cofactor. [2Fe-2S] cluster serves as cofactor.

The catalysed reaction is (4R,5S)-dethiobiotin + (sulfur carrier)-SH + 2 reduced [2Fe-2S]-[ferredoxin] + 2 S-adenosyl-L-methionine = (sulfur carrier)-H + biotin + 2 5'-deoxyadenosine + 2 L-methionine + 2 oxidized [2Fe-2S]-[ferredoxin]. The protein operates within cofactor biosynthesis; biotin biosynthesis; biotin from 7,8-diaminononanoate: step 2/2. In terms of biological role, catalyzes the conversion of dethiobiotin (DTB) to biotin by the insertion of a sulfur atom into dethiobiotin via a radical-based mechanism. This Janthinobacterium sp. (strain Marseille) (Minibacterium massiliensis) protein is Biotin synthase.